The chain runs to 150 residues: Large ribosomal subunit protein uL23 (150 aa).

The segment at 1 to 24 is disordered; that stretch reads MNKENKTQAVNKAKNTAKVAKKGS. Residues 7–18 show a composition bias toward low complexity; sequence TQAVNKAKNTAK.

Belongs to the universal ribosomal protein uL23 family.

This Tetrahymena thermophila (strain SB210) protein is Large ribosomal subunit protein uL23 (RPL23A).